Here is a 284-residue protein sequence, read N- to C-terminus: Nucleotide-binding protein in ptsO 5'region (284 aa).

An ATP-binding site is contributed by 8-15 (GRSGSGKS). 60 to 63 (DARN) contacts GTP.

It belongs to the RapZ-like family.

Displays ATPase and GTPase activities. The polypeptide is Nucleotide-binding protein in ptsO 5'region (Pseudomonas putida (Arthrobacter siderocapsulatus)).